The following is a 621-amino-acid chain: MENNGEMNAQPELSVDITKTYMYEKLWNICAGPLCVLPKPGEKVYYFPQGHIELIENSTRDELDHIRPIFDLPSKLRCRVVAIDRKVDKNTDEVYAQISLMPDTTEVMTHNTTMDTRRPIVYFFSKILTASDVSLSGGLIIPKQYAIECFPPLDMSQPISTQNLVAKDLYGQEWSFKHVFRGTPQRHMFTSGGGWSVFATTKRLIVGDIFVLLRGENGELRFGIRRAKHQQGHIPSSVISANCMQHGVIASVVNAFKTKCMFNVVYKPSSSQFVISYDKFVDAMNNNYIVGSRFRMQFEGKDFSEKRYDGTIIGVNDMSPHWKDSEWRSLKVQWDELSPFLRPNQVSPWDIEHLIPSSDISQSSLKKKKHWLQLNEIGATLSNLWTCQEIGQRSMNSPISVPEFSYPNAIEDSKFLSGLLLNHSLLAIPNENYNSDQMIQPRKEDITTEATTSCLLFGVDLTKVSKSKDSICPIESCKKSLPQDKKFDQTQPLRSPKEVQSTEFNFTRSRIKVHMQGVAISRAVDLTAMHGYNQLIQKLEELFDLKDELRTRNQWEIVFTNNEGAEMLVGDDPWPEFCNMAKRIFICSKEEIKKMKLKNKFFQPESKALTSSDVPPNVTDN.

Positions 124–228 (FSKILTASDV…ELRFGIRRAK (105 aa)) form a DNA-binding region, TF-B3. The 93-residue stretch at 508 to 600 (RSRIKVHMQG…EIKKMKLKNK (93 aa)) folds into the PB1 domain.

Belongs to the ARF family. As to quaternary structure, homodimers and heterodimers.

Its subcellular location is the nucleus. Its function is as follows. Auxin response factors (ARFs) are transcriptional factors that bind specifically to the DNA sequence 5'-TGTCTC-3' found in the auxin-responsive promoter elements (AuxREs). Could act as transcriptional activator or repressor. Formation of heterodimers with Aux/IAA proteins may alter their ability to modulate early auxin response genes expression. The chain is Auxin response factor 13 (ARF13) from Arabidopsis thaliana (Mouse-ear cress).